The chain runs to 482 residues: O-methyltransferase tpcA (482 aa).

S-adenosyl-L-methionine-binding positions include 293–294, D316, 348–349, and R364; these read GG and SF. H368 acts as the Proton acceptor in catalysis.

This sequence belongs to the class I-like SAM-binding methyltransferase superfamily. Cation-independent O-methyltransferase family. Specifically expressed in conidia.

It functions in the pathway secondary metabolite biosynthesis. Its function is as follows. O-methyltransferase; part of the gene cluster that mediates the biosynthesis of trypacidin, a mycotoxin with antiprotozoal activity and that plays a role in the infection process. The pathway begins with the synthesis of atrochrysone thioester by the polyketide synthase (PKS) tpcC. The atrochrysone carboxyl ACP thioesterase tpcB then breaks the thioester bond and releases the atrochrysone carboxylic acid from tpcC. The decarboxylase tpcK converts atrochrysone carboxylic acid to atrochrysone which is further reduced into emodin anthrone. The next step is performed by the emodin anthrone oxygenase tpcL that catalyzes the oxidation of emodinanthrone to emodin. Emodin O-methyltransferase encoded by tpcA catalyzes methylation of the 8-hydroxy group of emodin to form questin. Ring cleavage of questin by questin oxidase tpcI leads to desmethylsulochrin via several intermediates including questin epoxide. Another methylation step catalyzed by tpcM leads to the formation of sulochrin which is further converted to monomethylsulfochrin by tpcH. Finally, the tpcJ catalyzes the conversion of monomethylsulfochrin to trypacidin. Trypacidin is toxic for human pulmonary and bronchial epithelial cells by initiating the intracellular formation of nitric oxide (NO) and hydrogen peroxide (H(2)O(2)), thus triggering host necrotic cell death. The trypacidin pathway is also able to produce endocrocin via a distinct route from the endocrocin Enc pathway. This chain is O-methyltransferase tpcA, found in Aspergillus fumigatus (strain ATCC MYA-4609 / CBS 101355 / FGSC A1100 / Af293) (Neosartorya fumigata).